Reading from the N-terminus, the 560-residue chain is Membrane-bound O-acyltransferase GUP1 (560 aa).

Topologically, residues 1 to 43 (MSLISILSPLITSEGLDSRIKPSPKKDASTTTKPSLWKTTEFK) are extracellular. Residues 44-64 (FYYIAFLVVVPLMFYAGLQAS) traverse the membrane as a helical segment. Topologically, residues 65-101 (SPENPNYARYERLLSQGWLFGRKVDNSDSQYRFFRDN) are cytoplasmic. Residues 102-122 (FALLSVLMLVHTSIKRIVLYS) traverse the membrane as a helical segment. Over 123 to 131 (TNITKLRFD) the chain is Extracellular. Residues 132 to 152 (LIFGLIFLVAAHGVNSIRILA) form a helical membrane-spanning segment. Residues 153-165 (HMLILYAIAHVLK) are Cytoplasmic-facing. Residues 166–185 (NFRRIATISIWIYGISTLFI) form a helical membrane-spanning segment. The Extracellular segment spans residues 186–276 (NDNFRAYPFG…AAHPIQDYSL (91 aa)). Residues 277–297 (MNYIAYVTYTPLFIAGPIITF) traverse the membrane as a helical segment. The Cytoplasmic portion of the chain corresponds to 298–322 (NDYVYQSKHTLPSINFKFIFYYAVR). The chain crosses the membrane as a helical span at residues 323-343 (FVIALLSMEFILHFLHVVAIS). Over 344–352 (KTKAWENDT) the chain is Extracellular. A helical transmembrane segment spans residues 353–373 (PFQISMIGLFNLNIIWLKLLI). At 374-432 (PWRLFRLWALLDGIDTPENMIRCVDNNYSSLAFWRAWHRSYNKWVVRYIYIPLGGSKNR) the chain is on the cytoplasmic side. 2 helical membrane-spanning segments follow: residues 433–453 (VLTS…ELKL) and 454–474 (LLWG…TQIF). H447 is an active-site residue. At 475 to 485 (SHYTDAVWYRH) the chain is on the cytoplasmic side. A helical transmembrane segment spans residues 486–506 (VCAVGAVFNIWVMMIANLFGF). At 507 to 526 (CLGSDGTKKLLSDMFCTVSG) the chain is on the extracellular side. A helical transmembrane segment spans residues 527 to 547 (FKFVILASVSLFIAVQIMFEI). The Cytoplasmic segment spans residues 548–560 (REEEKRHGIYLKC).

This sequence belongs to the membrane-bound acyltransferase family. As to quaternary structure, interacts with mitochondrial outer membrane voltage-dependent anion channel (VDAC) POR1.

It localises to the cell membrane. The protein resides in the endoplasmic reticulum membrane. Its subcellular location is the mitochondrion membrane. Membrane-bound O-acyltransferase involved in the remodeling of glycosylphosphatidylinositol (GPI) anchors. Acts only on GPI-anchored proteins, but not on free GPI lipids. Acts as an acyltransferase for GPI anchors that adds C26 fatty acids to the sn2 position of lyso-PI-containing GPI anchors. PER1 first deacylates, GUP1 subsequently reacylates the anchor lipid, thus replacing a shorter fatty acid (C16:0 or C18:0) by C26:0. Also involved in lipid metabolism, having profound effects on sphingolipid-sterol-ordered domains integrity and assembly. Together with GUP2, has an influence on the chemical composition of the yeast extracellular matrix (yECM) in yeast multicellular aggregates, such as biofilms and colonies. Involved in cell integrity and apoptosis. This chain is Membrane-bound O-acyltransferase GUP1 (GUP1), found in Saccharomyces cerevisiae (strain ATCC 204508 / S288c) (Baker's yeast).